Consider the following 255-residue polypeptide: Small ribosomal subunit protein eS1 (255 aa).

An N-acetylalanine; partial modification is found at Ala-2.

It belongs to the eukaryotic ribosomal protein eS1 family. Component of the small ribosomal subunit. Mature ribosomes consist of a small (40S) and a large (60S) subunit. The 40S subunit contains about 33 different proteins and 1 molecule of RNA (18S). The 60S subunit contains about 49 different proteins and 3 molecules of RNA (25S, 5.8S and 5S).

It localises to the cytoplasm. The protein is Small ribosomal subunit protein eS1 of Kluyveromyces lactis (strain ATCC 8585 / CBS 2359 / DSM 70799 / NBRC 1267 / NRRL Y-1140 / WM37) (Yeast).